A 1804-amino-acid polypeptide reads, in one-letter code: Obscurin-like protein 1 (1804 aa).

Ser10 carries the phosphoserine modification. 4 Ig-like domains span residues 12–100 (PCFL…AAVT), 128–225 (PKFL…ALLQ), 241–330 (PKPV…QTLS), and 339–425 (PRLR…ANVT). Residues 17–19 (FPR) form an interaction with TTN region. The cysteines at positions 33 and 84 are disulfide-linked. An interaction with TTN region spans residues 85-94 (RARNAAGEAY). An intrachain disulfide couples Cys149 to Cys209. Positions 227–249 (HQPRESPPQDPDENPKPVLEPLK) are disordered. Disulfide bonds link Cys267/Cys319 and Cys362/Cys412. A Fibronectin type-III domain is found at 517–615 (PPGPPVMVEM…FNGSAHLVPT (99 aa)). Ig-like domains lie at 720 to 800 (PQDK…FGVT), 804 to 891 (PPVH…FTVT), 902 to 982 (PSSE…FTIT), 986 to 1075 (PPVR…VTVT), 1078 to 1165 (PERI…FNVS), 1176 to 1261 (PEAA…FNVQ), 1266 to 1442 (PPVK…ARLS), 1536 to 1621 (PVTI…ARLT), 1625 to 1694 (REVS…EDTG), and 1702 to 1798 (PAQS…ADTQ). 8 cysteine pairs are disulfide-bonded: Cys738–Cys788, Cys829–Cys879, Cys920–Cys970, Cys1011–Cys1061, Cys1103–Cys1153, Cys1195–Cys1245, Cys1289–Cys1430, and Cys1558–Cys1608.

As to quaternary structure, component of the 3M complex, composed of core components CUL7, CCDC8 and OBSL1. Interacts with CCDC8. Interacts with CUL7; the interaction is direct. Interacts with FBXW8. Interacts (via N-terminal Ig-like domain) with TTN/titin (via C-terminal Ig-like domain); the interaction is direct.

It is found in the cytoplasm. The protein resides in the perinuclear region. It localises to the golgi apparatus. Its function is as follows. Core component of the 3M complex, a complex required to regulate microtubule dynamics and genome integrity. It is unclear how the 3M complex regulates microtubules, it could act by controlling the level of a microtubule stabilizer. Acts as a regulator of the Cul7-RING(FBXW8) ubiquitin-protein ligase, playing a critical role in the ubiquitin ligase pathway that regulates Golgi morphogenesis and dendrite patterning in brain. Required to localize CUL7 to the Golgi apparatus in neurons. The sequence is that of Obscurin-like protein 1 (Obsl1) from Mus musculus (Mouse).